The sequence spans 139 residues: Large ribosomal subunit protein uL16 (139 aa).

The protein belongs to the universal ribosomal protein uL16 family. As to quaternary structure, part of the 50S ribosomal subunit.

In terms of biological role, binds 23S rRNA and is also seen to make contacts with the A and possibly P site tRNAs. This Crocosphaera subtropica (strain ATCC 51142 / BH68) (Cyanothece sp. (strain ATCC 51142)) protein is Large ribosomal subunit protein uL16.